Here is a 508-residue protein sequence, read N- to C-terminus: MDTMITTPLILILITCGANSQTVKPDTASESDQPTWSNPLFTYPEGCTLDKLSKVNASQLRCPRIFDDENRGLIAYPTSIRSLSVGNDLGDIHTQGNHIHKVLYRTICSTGFFGGQTIEKALVKMKLSTKEAGAYDTTTAAALYFPAPRCQWYTDNVQNDLIFYYTTQKSVLRDPYTRDFLDSDFIGGKCTKSPCQTHWSNVVWMGDAGIPACDSSQEIKAHLFVDKISNRVVKATSYGHHPWGLHQACMIEFCGQQWIRTDLGDLISVVYNSGSEILSFPKCEDKTVGMRGNLDDFAYLDDLVKASESREECLEAHAEIISTNSVTPYLLSKFRSPHPGINDVYAMHKGSIYHGMCMTVAVDEVSKDRTTYRAHRATSFTKWERPFGDEWEGFHGLHGNNTTIIPDLEKYVAQYKMSMMEPMSIKSVPHPSILALYNETDVSGISIRKLDSFDLQSLHWSFWPTISALGGIPFVLLLAVAACCCWSGRPPTPSVPQSIPMYHLANRS.

An N-terminal signal peptide occupies residues Met1–Ser20. At Gln21 to Ser461 the chain is on the virion surface side. N-linked (GlcNAc...) asparagine; by host glycosylation is found at Asn56, Asn400, Asn401, and Asn438. A helical transmembrane segment spans residues Phe462–Ala482. The Intravirion segment spans residues Cys483–Ser508.

This sequence belongs to the novirhabdovirus glycoprotein family. Homotrimer.

It is found in the virion membrane. Functionally, binds to specific receptor at cellular surface, bringing about the attachment of the virus particle to the cell. Plays a major role in the determination of host range restriction and virulence. Class I viral fusion protein. Responsible for penetration of the viral nucleocapsid into the cell cytoplasm by mediating the fusion of the membrane of the endocytosed virus particle with the endosomal membrane. Low pH in endosomes induce an irreversible conformational change in G, releasing a fusion hydrophobic peptide. In Salmo (IHNV), this protein is Glycoprotein (G).